Consider the following 415-residue polypeptide: Dynein assembly factor with WD repeat domains 1 (415 aa).

WD repeat units lie at residues 90 to 129, 132 to 174, 175 to 214, 217 to 256, 259 to 298, 301 to 340, 343 to 384, and 386 to 415; these read AHILPLTNVALNKAGSCFITGSYDRTCKVWDTASGEELHT, GHRN…HTFR, GHTAEIVCLSFNPQSTVVATGSMDTTAKLWDIQSGEEVVT, GHLAEIISLSFDTSGDRIITGSFDHTVVVWDASTGRKVHT, GHCAEISSALFSWDCSLILTGSMDKTCMLWDATSGKCVAT, GHDDEILDSCFDYTGKLIATASADGTARVYNATTRKCITK, GHEG…QVLE, and HTDEIFSCAFNYKGNIVITGSKDNSCRIWR.

Belongs to the WD repeat WDR69 family. As to quaternary structure, interacts with IFT46.

The protein resides in the cytoplasm. It localises to the cytoskeleton. The protein localises to the flagellum basal body. Its subcellular location is the flagellum axoneme. Functionally, required for axonemal dynein assembly and ciliary motility in ciliated organs, including Kupffer's vesicle, during embryogenesis. Facilitates the onset of robust cilia motility during development. This Rattus norvegicus (Rat) protein is Dynein assembly factor with WD repeat domains 1 (Daw1).